We begin with the raw amino-acid sequence, 335 residues long: Dihydroorotate dehydrogenase (quinone) (335 aa).

FMN is bound by residues 58 to 62 and Thr82; that span reads AGADK. Lys62 contributes to the substrate binding site. 107 to 111 is a substrate binding site; that stretch reads NRNGF. FMN contacts are provided by Asn135 and Asn168. Asn168 is a binding site for substrate. The active-site Nucleophile is the Ser171. A substrate-binding site is contributed by Asn173. Residues Lys213 and Gly241 each contribute to the FMN site. A substrate-binding site is contributed by 242–243; it reads NT. Residues Gly264, Gly293, and 314–315 contribute to the FMN site; that span reads YS.

It belongs to the dihydroorotate dehydrogenase family. Type 2 subfamily. In terms of assembly, monomer. FMN serves as cofactor.

It is found in the cell membrane. It carries out the reaction (S)-dihydroorotate + a quinone = orotate + a quinol. It participates in pyrimidine metabolism; UMP biosynthesis via de novo pathway; orotate from (S)-dihydroorotate (quinone route): step 1/1. Its function is as follows. Catalyzes the conversion of dihydroorotate to orotate with quinone as electron acceptor. The sequence is that of Dihydroorotate dehydrogenase (quinone) from Haemophilus ducreyi (strain 35000HP / ATCC 700724).